A 151-amino-acid polypeptide reads, in one-letter code: Viral interleukin-17 (151 aa).

An N-terminal signal peptide occupies residues 1-22 (MTFRKTSLVLLLLLSIDCIVKS). Residues Asn36, Asn53, and Asn64 are each glycosylated (N-linked (GlcNAc...) asparagine; by host). 2 disulfides stabilise this stretch: Cys90-Cys140 and Cys95-Cys142.

It belongs to the IL-17 family.

The protein localises to the secreted. In Saimiri sciureus (Common squirrel monkey), this protein is Viral interleukin-17 (13).